Reading from the N-terminus, the 753-residue chain is 5-methyltetrahydropteroyltriglutamate--homocysteine methyltransferase (753 aa).

Residues 17-20 and lysine 117 contribute to the 5-methyltetrahydropteroyltri-L-glutamate site; that span reads RELK. L-homocysteine contacts are provided by residues 431 to 433 and glutamate 484; that span reads IGS. L-methionine is bound by residues 431–433 and glutamate 484; that span reads IGS. Residues 515-516 and tryptophan 561 contribute to the 5-methyltetrahydropteroyltri-L-glutamate site; that span reads RC. Aspartate 599 contacts L-homocysteine. Aspartate 599 contributes to the L-methionine binding site. Glutamate 605 is a 5-methyltetrahydropteroyltri-L-glutamate binding site. The Zn(2+) site is built by histidine 641, cysteine 643, and glutamate 665. Histidine 694 acts as the Proton donor in catalysis. Zn(2+) is bound at residue cysteine 726.

This sequence belongs to the vitamin-B12 independent methionine synthase family. Zn(2+) serves as cofactor.

The enzyme catalyses 5-methyltetrahydropteroyltri-L-glutamate + L-homocysteine = tetrahydropteroyltri-L-glutamate + L-methionine. It functions in the pathway amino-acid biosynthesis; L-methionine biosynthesis via de novo pathway; L-methionine from L-homocysteine (MetE route): step 1/1. Catalyzes the transfer of a methyl group from 5-methyltetrahydrofolate to homocysteine resulting in methionine formation. This is 5-methyltetrahydropteroyltriglutamate--homocysteine methyltransferase from Shigella sonnei (strain Ss046).